Consider the following 260-residue polypeptide: Glutamate racemase (260 aa).

Residues Asp14–Ser15 and Tyr46–Gly47 contribute to the substrate site. Cys77 serves as the catalytic Proton donor/acceptor. Asn78 to Thr79 contributes to the substrate binding site. The Proton donor/acceptor role is filled by Cys188. Thr189–His190 provides a ligand contact to substrate.

Belongs to the aspartate/glutamate racemases family.

The enzyme catalyses L-glutamate = D-glutamate. It functions in the pathway cell wall biogenesis; peptidoglycan biosynthesis. Functionally, provides the (R)-glutamate required for cell wall biosynthesis. The protein is Glutamate racemase of Clostridium perfringens (strain 13 / Type A).